Consider the following 494-residue polypeptide: Anthranilate synthase component 1 (494 aa).

Residues serine 50 and 276–278 each bind L-tryptophan; that span reads PYM. Chorismate is bound at residue 311–312; that stretch reads GT. Position 338 (glutamate 338) interacts with Mg(2+). Chorismate contacts are provided by residues tyrosine 426, arginine 446, 460–462, and glycine 462; that span reads GAG. Glutamate 475 lines the Mg(2+) pocket.

Belongs to the anthranilate synthase component I family. As to quaternary structure, heterotetramer consisting of two non-identical subunits: a beta subunit (TrpG) and a large alpha subunit (TrpE). Requires Mg(2+) as cofactor.

It catalyses the reaction chorismate + L-glutamine = anthranilate + pyruvate + L-glutamate + H(+). It participates in amino-acid biosynthesis; L-tryptophan biosynthesis; L-tryptophan from chorismate: step 1/5. Feedback inhibited by tryptophan. Functionally, part of a heterotetrameric complex that catalyzes the two-step biosynthesis of anthranilate, an intermediate in the biosynthesis of L-tryptophan. In the first step, the glutamine-binding beta subunit (TrpG) of anthranilate synthase (AS) provides the glutamine amidotransferase activity which generates ammonia as a substrate that, along with chorismate, is used in the second step, catalyzed by the large alpha subunit of AS (TrpE) to produce anthranilate. In the absence of TrpG, TrpE can synthesize anthranilate directly from chorismate and high concentrations of ammonia. This Acetivibrio thermocellus (Hungateiclostridium thermocellum) protein is Anthranilate synthase component 1 (trpE).